A 118-amino-acid chain; its full sequence is Putative pterin-4-alpha-carbinolamine dehydratase (118 aa).

The protein belongs to the pterin-4-alpha-carbinolamine dehydratase family.

The catalysed reaction is (4aS,6R)-4a-hydroxy-L-erythro-5,6,7,8-tetrahydrobiopterin = (6R)-L-erythro-6,7-dihydrobiopterin + H2O. The protein is Putative pterin-4-alpha-carbinolamine dehydratase of Pseudomonas fluorescens (strain SBW25).